A 208-amino-acid polypeptide reads, in one-letter code: Attacin-A (208 aa).

The first 20 residues, 1 to 20 (MQSFKICFFISCLSVVLVKG), serve as a signal peptide directing secretion. The propeptide occupies 21–47 (QFGGTVSSNPNGGLDVNARLSKTIGDP).

Hemolymph and fat body.

The protein localises to the secreted. In terms of biological role, hemolymph antibacterial protein against Gram-negative bacteria. The protein is Attacin-A of Glossina morsitans morsitans (Savannah tsetse fly).